Here is a 154-residue protein sequence, read N- to C-terminus: Superoxide dismutase [Cu-Zn] (154 aa).

The Cu cation site is built by histidine 47, histidine 49, and histidine 64. Cysteines 58 and 147 form a disulfide. Histidine 64, histidine 72, histidine 81, and aspartate 84 together coordinate Zn(2+). A Cu cation-binding site is contributed by histidine 121. Residues 125–136 are compositionally biased toward basic and acidic residues; it reads DDLGKGGNEESL. A disordered region spans residues 125 to 144; the sequence is DDLGKGGNEESLKTGNAGPR. Residue arginine 144 coordinates substrate.

It belongs to the Cu-Zn superoxide dismutase family. As to quaternary structure, homodimer. Requires Cu cation as cofactor. Zn(2+) serves as cofactor.

Its subcellular location is the cytoplasm. The enzyme catalyses 2 superoxide + 2 H(+) = H2O2 + O2. Destroys radicals which are normally produced within the cells and which are toxic to biological systems. This is Superoxide dismutase [Cu-Zn] (SOD1) from Candida glabrata (strain ATCC 2001 / BCRC 20586 / JCM 3761 / NBRC 0622 / NRRL Y-65 / CBS 138) (Yeast).